A 357-amino-acid polypeptide reads, in one-letter code: Outer membrane porin protein OmpD (357 aa).

The signal sequence occupies residues 1-21 (MKLKLVAVAVTTLLAAGAVNA).

This sequence belongs to the Gram-negative porin family. As to quaternary structure, homotrimer.

Its subcellular location is the cell outer membrane. In terms of biological role, forms pores that allow passive diffusion of small molecules across the outer membrane. This chain is Outer membrane porin protein OmpD (ompD), found in Citrobacter koseri (strain ATCC BAA-895 / CDC 4225-83 / SGSC4696).